We begin with the raw amino-acid sequence, 237 residues long: 1-(5-phosphoribosyl)-5-[(5-phosphoribosylamino)methylideneamino] imidazole-4-carboxamide isomerase (237 aa).

Asp-8 (proton acceptor) is an active-site residue. Asp-129 functions as the Proton donor in the catalytic mechanism.

It belongs to the HisA/HisF family.

Its subcellular location is the cytoplasm. The enzyme catalyses 1-(5-phospho-beta-D-ribosyl)-5-[(5-phospho-beta-D-ribosylamino)methylideneamino]imidazole-4-carboxamide = 5-[(5-phospho-1-deoxy-D-ribulos-1-ylimino)methylamino]-1-(5-phospho-beta-D-ribosyl)imidazole-4-carboxamide. It functions in the pathway amino-acid biosynthesis; L-histidine biosynthesis; L-histidine from 5-phospho-alpha-D-ribose 1-diphosphate: step 4/9. The sequence is that of 1-(5-phosphoribosyl)-5-[(5-phosphoribosylamino)methylideneamino] imidazole-4-carboxamide isomerase from Dehalococcoides mccartyi (strain ATCC BAA-2266 / KCTC 15142 / 195) (Dehalococcoides ethenogenes (strain 195)).